Here is a 187-residue protein sequence, read N- to C-terminus: Apolipophorin-3 (187 aa).

The N-terminal stretch at 1 to 17 (MAAKFIILLALFALSQA) is a signal peptide. A propeptide spanning residues 18–22 (SVVRR) is cleaved from the precursor.

This sequence belongs to the insect apolipophorin-3 family. Equilibrium between a soluble monomer and a bound lipoprotein form. Apolipophorin-3 associates with lipophorin during lipid loading until each particle contains 9 or 14 molecules of apolipophorin-3. As to expression, hemolymph.

The protein resides in the secreted. In terms of biological role, assists in the loading of diacylglycerol, generated from triacylglycerol stores in the fat body through the action of adipokinetic hormone, into lipophorin, the hemolymph lipoprotein. It increases the lipid carrying capacity of lipophorin by covering the expanding hydrophobic surface resulting from diacylglycerol uptake. It thus plays a critical role in the transport of lipids during flight in several species of insects. In Hyphantria cunea (Fall webworm moth), this protein is Apolipophorin-3.